The chain runs to 214 residues: Adenylate kinase (214 aa).

Position 10-15 (10-15 (GAGKGT)) interacts with ATP. The interval 30 to 59 (STGDMFRAAVKNETPLGLEAKSYMDKGHLV) is NMP. Residues Thr31, Arg36, 57–59 (HLV), 85–88 (GFPR), and Gln92 each bind AMP. The LID stretch occupies residues 126–163 (GRWICPVCGASYHTMFNPPKEAGVCDKDGGKLYQREDD). Arg127 provides a ligand contact to ATP. 2 residues coordinate Zn(2+): Cys130 and Cys133. 136-137 (SY) is a binding site for ATP. Residues Cys150 and Asp153 each coordinate Zn(2+). Arg160 and Arg171 together coordinate AMP. ATP is bound at residue Gln199.

Belongs to the adenylate kinase family. Monomer.

The protein resides in the cytoplasm. It carries out the reaction AMP + ATP = 2 ADP. It participates in purine metabolism; AMP biosynthesis via salvage pathway; AMP from ADP: step 1/1. Its function is as follows. Catalyzes the reversible transfer of the terminal phosphate group between ATP and AMP. Plays an important role in cellular energy homeostasis and in adenine nucleotide metabolism. The protein is Adenylate kinase of Brevibacillus brevis (strain 47 / JCM 6285 / NBRC 100599).